Consider the following 143-residue polypeptide: Transcriptional regulator MraZ (143 aa).

SpoVT-AbrB domains lie at 5–47 and 76–119; these read THHP…PRAE and TDEQ…NAER.

The protein belongs to the MraZ family. In terms of assembly, forms oligomers.

The protein resides in the cytoplasm. It is found in the nucleoid. The sequence is that of Transcriptional regulator MraZ from Saccharopolyspora erythraea (strain ATCC 11635 / DSM 40517 / JCM 4748 / NBRC 13426 / NCIMB 8594 / NRRL 2338).